The primary structure comprises 528 residues: Beta-galactoside alpha-2,6-sialyltransferase 2 (528 aa).

The Cytoplasmic portion of the chain corresponds to 1-10; the sequence is MKPNLKQWKQ. Residues 11-31 form a helical; Signal-anchor for type II membrane protein membrane-spanning segment; the sequence is LMLFGIFAWGLLFLVIFIYFT. Over 32-528 the chain is Lumenal; it reads DSNSAEPVPS…CPERNNFPPL (497 aa). Asn-167, Asn-308, and Asn-338 each carry an N-linked (GlcNAc...) asparagine glycan. 3 disulfide bridges follow: Cys-254/Cys-519, Cys-297/Cys-448, and Cys-466/Cys-477.

The protein belongs to the glycosyltransferase 29 family.

It is found in the golgi apparatus. The protein resides in the golgi stack membrane. The enzyme catalyses a beta-D-galactoside + CMP-N-acetyl-beta-neuraminate = an N-acetyl-alpha-neuraminyl-(2-&gt;6)-beta-D-galactosyl derivative + CMP + H(+). Its function is as follows. Transfers sialic acid from the donor of substrate CMP-sialic acid to galactose containing acceptor substrates. The sequence is that of Beta-galactoside alpha-2,6-sialyltransferase 2 (ST6GAL2) from Gallus gallus (Chicken).